Reading from the N-terminus, the 85-residue chain is MAQKINITNIPARRPFGRRRKVDPFTGQHAQEIDYKDVKMLQRYISEKGKIVPSRITAVNLKNQRKLAQAIKRARMLALIPFEVK.

It belongs to the bacterial ribosomal protein bS18 family. In terms of assembly, part of the 30S ribosomal subunit. Forms a tight heterodimer with protein bS6.

Its function is as follows. Binds as a heterodimer with protein bS6 to the central domain of the 16S rRNA, where it helps stabilize the platform of the 30S subunit. The sequence is that of Small ribosomal subunit protein bS18 from Hyphomonas neptunium (strain ATCC 15444).